The sequence spans 207 residues: LexA repressor (207 aa).

A DNA-binding region (H-T-H motif) is located at residues 28–48; that stretch reads VREIGEAVGLASSSTVHGHLS. Active-site for autocatalytic cleavage activity residues include serine 129 and lysine 167.

The protein belongs to the peptidase S24 family. As to quaternary structure, homodimer.

The catalysed reaction is Hydrolysis of Ala-|-Gly bond in repressor LexA.. Functionally, represses a number of genes involved in the response to DNA damage (SOS response), including recA and lexA. In the presence of single-stranded DNA, RecA interacts with LexA causing an autocatalytic cleavage which disrupts the DNA-binding part of LexA, leading to derepression of the SOS regulon and eventually DNA repair. The sequence is that of LexA repressor from Halalkalibacterium halodurans (strain ATCC BAA-125 / DSM 18197 / FERM 7344 / JCM 9153 / C-125) (Bacillus halodurans).